The primary structure comprises 990 residues: Presequence protease, mitochondrial (990 aa).

The transit peptide at 1–56 (MLRFQRTVPRVAIRRLANVYSEGAVLHGYKVRRAQEIPEMRMAAVELEHEMTGARH) directs the protein to the mitochondrion. Residue His-84 coordinates Zn(2+). Glu-87 (proton acceptor) is an active-site residue. Residue His-88 participates in Zn(2+) binding. Residue Glu-160 is part of the active site. Glu-185 contacts Zn(2+).

This sequence belongs to the peptidase M16 family. PreP subfamily. Monomer and homodimer; homodimerization is induced by binding of the substrate. It depends on Zn(2+) as a cofactor.

Its subcellular location is the mitochondrion intermembrane space. The protein localises to the mitochondrion matrix. Its function is as follows. Degrades mitochondrial transit peptides after their cleavage in the intermembrane space or in the matrix, and presequence peptides; clearance of these peptides is required to keep the presequence processing machinery running. Preferentially cleaves the N-terminal side of paired basic amino acid residues. Also degrades other unstructured peptides. May function as an ATP-dependent peptidase as opposed to a metalloendopeptidase. The protein is Presequence protease, mitochondrial (CYM1) of Eremothecium gossypii (strain ATCC 10895 / CBS 109.51 / FGSC 9923 / NRRL Y-1056) (Yeast).